The primary structure comprises 336 residues: Holliday junction branch migration complex subunit RuvB (336 aa).

The large ATPase domain (RuvB-L) stretch occupies residues 1–183 (MTEEHLTSQE…FGIVEHMQYY (183 aa)). Residues L22, R23, G64, K67, T68, T69, 130–132 (EDF), R173, Y183, and R220 contribute to the ATP site. T68 is a binding site for Mg(2+). A small ATPAse domain (RuvB-S) region spans residues 184–254 (QVEDLEKIIL…TTAMALKQLQ (71 aa)). Positions 257 to 336 (SAGLDQTDRK…LNLPLPGEEE (80 aa)) are head domain (RuvB-H). DNA contacts are provided by R293 and R317.

This sequence belongs to the RuvB family. Homohexamer. Forms an RuvA(8)-RuvB(12)-Holliday junction (HJ) complex. HJ DNA is sandwiched between 2 RuvA tetramers; dsDNA enters through RuvA and exits via RuvB. An RuvB hexamer assembles on each DNA strand where it exits the tetramer. Each RuvB hexamer is contacted by two RuvA subunits (via domain III) on 2 adjacent RuvB subunits; this complex drives branch migration. In the full resolvosome a probable DNA-RuvA(4)-RuvB(12)-RuvC(2) complex forms which resolves the HJ.

Its subcellular location is the cytoplasm. The enzyme catalyses ATP + H2O = ADP + phosphate + H(+). Its function is as follows. The RuvA-RuvB-RuvC complex processes Holliday junction (HJ) DNA during genetic recombination and DNA repair, while the RuvA-RuvB complex plays an important role in the rescue of blocked DNA replication forks via replication fork reversal (RFR). RuvA specifically binds to HJ cruciform DNA, conferring on it an open structure. The RuvB hexamer acts as an ATP-dependent pump, pulling dsDNA into and through the RuvAB complex. RuvB forms 2 homohexamers on either side of HJ DNA bound by 1 or 2 RuvA tetramers; 4 subunits per hexamer contact DNA at a time. Coordinated motions by a converter formed by DNA-disengaged RuvB subunits stimulates ATP hydrolysis and nucleotide exchange. Immobilization of the converter enables RuvB to convert the ATP-contained energy into a lever motion, pulling 2 nucleotides of DNA out of the RuvA tetramer per ATP hydrolyzed, thus driving DNA branch migration. The RuvB motors rotate together with the DNA substrate, which together with the progressing nucleotide cycle form the mechanistic basis for DNA recombination by continuous HJ branch migration. Branch migration allows RuvC to scan DNA until it finds its consensus sequence, where it cleaves and resolves cruciform DNA. The sequence is that of Holliday junction branch migration complex subunit RuvB from Lactobacillus delbrueckii subsp. bulgaricus (strain ATCC 11842 / DSM 20081 / BCRC 10696 / JCM 1002 / NBRC 13953 / NCIMB 11778 / NCTC 12712 / WDCM 00102 / Lb 14).